Consider the following 523-residue polypeptide: Calcium-dependent protein kinase 1 (523 aa).

The interval 1-36 is disordered; the sequence is MGCNQSKSANDVRGNKVNHVNSKKKNNKREDTNDGE. Glycine 2 is lipidated: N-myristoyl glycine. Cysteine 3 carries S-palmitoyl cysteine lipidation. Residues 57–324 form the Protein kinase domain; it reads YFKVRKLGSG…AEEALNSRWI (268 aa). ATP contacts are provided by residues 63-71, lysine 86, and lysine 90; that span reads LGSGAYGEV. The residue at position 65 (serine 65) is a Phosphoserine. Serine 117 is subject to Phosphoserine. Aspartate 190 (proton acceptor) is an active-site residue. A phosphoserine mark is found at serine 216 and serine 219. At threonine 230 the chain carries Phosphothreonine. At serine 334 the chain carries Phosphoserine. The short motif at 345-352 is the J domain autoinhibitory motif element; it reads NMRKFEGS. The j domain stretch occupies residues 345-363; it reads NMRKFEGSQKLAQAAILFI. Residues 353–363 carry the J domain interacts with the EF-hand domains motif; sequence QKLAQAAILFI. 4 consecutive EF-hand domains span residues 371–406, 415–450, 451–486, and 487–520; these read EERK…LRNF, NVEE…KQIL, FSEE…TSIS, and EKTW…ICDH. Residues aspartate 384, asparagine 386, aspartate 388, glutamine 390, glutamate 395, aspartate 428, aspartate 430, asparagine 432, tyrosine 434, glutamate 439, aspartate 464, aspartate 466, serine 468, lysine 470, glutamate 475, aspartate 498, asparagine 500, aspartate 502, methionine 504, and glutamate 509 each contribute to the Ca(2+) site.

It belongs to the protein kinase superfamily. Ser/Thr protein kinase family. CDPK subfamily. In terms of assembly, monomer. The cofactor is Mg(2+). Myristoylated. Myristoylation and palmitoylation are required for the localization to the parasitophorous vacuole membrane. In terms of processing, palmitoylated. Palmitoylation increases in merozoites in response to low level of extracellular K(+) in the host blood. Myristoylation and palmitoylation are required for the localization to the parasitophorous vacuole membrane. Post-translationally, phosphorylation at Thr-230 may regulate CDPK1 kinase activity. Phosphorylation increases in response to an increase in intracellular Ca(2+) levels. Autophosphorylated in vitro. Autophosphorylation does not affect membrane localization in vitro.

The protein resides in the membrane. Its subcellular location is the cell membrane. It localises to the parasitophorous vacuole membrane. It is found in the cytoplasm. The protein localises to the cell projection. The protein resides in the cilium. Its subcellular location is the flagellum. It localises to the host cell membrane. The enzyme catalyses L-seryl-[protein] + ATP = O-phospho-L-seryl-[protein] + ADP + H(+). It catalyses the reaction L-threonyl-[protein] + ATP = O-phospho-L-threonyl-[protein] + ADP + H(+). Activated by calcium. Upon calcium binding to the EF-hand domains, the C-terminus of the junction domain (J domain) undergoes a conformational change which results in the dissociation of the pseudo-substrate inhibitory motif from the catalytic domain. This, in turn may facilitate the autophosphorylation of the activation loop at Thr-230, which leads to the kinase activation. In terms of biological role, calcium-dependent protein kinase which acts as a sensor and effector of intracellular Ca(2+) levels probably in part downstream of cGMP-activated PKG kinase. During the liver stage, involved in sporozoite motility and thus in sporozoite invasion of host hepatocytes, probably together with CDPK4 and CDPK5. In the mosquito midgut and during the last stage of male gamete exflagellation, may play a role in the rupture of the host erythrocyte membrane. In the mosquito midgut, required for the differentiation of the zygote into the ookinete by promoting the translational activation of a subset of repressed mRNAs; these mRNAs are kept repressed in the zygote by the DOZI- or CITH-containing mRNP complexes. Dispensable during the asexual blood stage. This is Calcium-dependent protein kinase 1 from Plasmodium berghei (strain Anka).